The following is a 209-amino-acid chain: uncharacterized protein (209 aa).

Active-site charge relay system residues include Ser-119 and His-160.

Belongs to the peptidase S51 family.

This is an uncharacterized protein from Listeria innocua serovar 6a (strain ATCC BAA-680 / CLIP 11262).